A 226-amino-acid polypeptide reads, in one-letter code: HTH-type transcriptional regulator TcmR (226 aa).

A compositionally biased stretch (polar residues) spans 1–16 (MDSAETDTPSTRSTPN). A disordered region spans residues 1–25 (MDSAETDTPSTRSTPNGPGLRQRKL). Positions 26–86 (RRTRDQLIRE…TPISAIDEAF (61 aa)) constitute an HTH tetR-type domain. Positions 49-68 (TVEQIAEAVEVHPRTFFRHF) form a DNA-binding region, H-T-H motif.

Its pathway is antibiotic biosynthesis; tetracenomycin C biosynthesis. Functionally, represses transcription of the divergently oriented tcmR and tcmA (tetracenomycin C resistance and export) genes by binding to an intergenic operator region. This binding is inhibited by tetracenomycin C. The polypeptide is HTH-type transcriptional regulator TcmR (tcmR) (Streptomyces glaucescens).